The sequence spans 144 residues: Large ribosomal subunit protein uL15 (144 aa).

A disordered region spans residues 1–49 (MIKLECLQDPSPRKRRTKLLGRGPSSGHGKTSSRGHKGDCSRSGYKRRF).

It belongs to the universal ribosomal protein uL15 family. Part of the 50S ribosomal subunit.

In terms of biological role, binds to the 23S rRNA. The polypeptide is Large ribosomal subunit protein uL15 (Chlamydia trachomatis serovar A (strain ATCC VR-571B / DSM 19440 / HAR-13)).